A 77-amino-acid polypeptide reads, in one-letter code: DNA-directed RNA polymerase subunit epsilon (77 aa).

The protein belongs to the RNA polymerase subunit epsilon family. RNAP is composed of a core of 2 alpha, a beta and a beta' subunit. The core is associated with a delta subunit, and at least one of epsilon or omega. When a sigma factor is associated with the core the holoenzyme is formed, which can initiate transcription.

The enzyme catalyses RNA(n) + a ribonucleoside 5'-triphosphate = RNA(n+1) + diphosphate. Functionally, a non-essential component of RNA polymerase (RNAP). This chain is DNA-directed RNA polymerase subunit epsilon, found in Streptococcus pneumoniae serotype 19F (strain G54).